A 65-amino-acid chain; its full sequence is uncharacterized protein (65 aa).

Positions 1–22 (MEKETPQQETKQSTNKESGFFD) are disordered. A compositionally biased stretch (polar residues) spans 7-17 (QQETKQSTNKE). The stretch at 22–65 (DEIIKRTNQLLEKEKELHEKYNKEITSQQDQIDQLKKKINQLKY) forms a coiled coil.

This is an uncharacterized protein from Dictyostelium discoideum (Social amoeba).